The chain runs to 1058 residues: Protein argonaute MEL1 (1058 aa).

2 stretches are compositionally biased toward gly residues: residues 1–12 (MAYRGGGRGGRG) and 24–37 (DVPG…GGGA). Disordered stretches follow at residues 1-77 (MAYR…YGAP) and 115-147 (RAPP…PSAT). Residues 48–70 (WPPPGMTPRPGPPQPQYPRPGPP) are compositionally biased toward pro residues. Residues 121–147 (HSSAPAPYQPAAAAPAPSSSSTAPSAT) show a composition bias toward low complexity. A PAZ domain is found at 407-520 (TVIQFVEEFL…LPMEVCKIVE (114 aa)). The Piwi domain maps to 696-1016 (LLIVILPEVS…AAFRARYYVE (321 aa)).

The protein belongs to the argonaute family. Ago subfamily.

It localises to the nucleus. The protein resides in the nucleolus. Essential for the progression of premeiotic mitosis and meiosis during sporogenesis. Regulates the cell division of premeiotic germ cells, the proper modification of meiotic chromosomes, and the faithful progression of meiosis, probably via small RNA-mediated gene silencing. May be involved in histone H3 'Lys-9' demethylation in the pericentromeric region. The polypeptide is Protein argonaute MEL1 (MEL1) (Oryza sativa subsp. japonica (Rice)).